A 63-amino-acid chain; its full sequence is Large ribosomal subunit protein bL32 (63 aa).

This sequence belongs to the bacterial ribosomal protein bL32 family.

In Lacticaseibacillus paracasei (strain ATCC 334 / BCRC 17002 / CCUG 31169 / CIP 107868 / KCTC 3260 / NRRL B-441) (Lactobacillus paracasei), this protein is Large ribosomal subunit protein bL32.